We begin with the raw amino-acid sequence, 613 residues long: Dihydroxy-acid dehydratase (613 aa).

Asp81 contributes to the Mg(2+) binding site. Cys122 contacts [2Fe-2S] cluster. 2 residues coordinate Mg(2+): Asp123 and Lys124. The residue at position 124 (Lys124) is an N6-carboxylysine. Cys193 provides a ligand contact to [2Fe-2S] cluster. A Mg(2+)-binding site is contributed by Glu489. The Proton acceptor role is filled by Ser515.

The protein belongs to the IlvD/Edd family. Homodimer. [2Fe-2S] cluster is required as a cofactor. It depends on Mg(2+) as a cofactor.

It catalyses the reaction (2R)-2,3-dihydroxy-3-methylbutanoate = 3-methyl-2-oxobutanoate + H2O. The enzyme catalyses (2R,3R)-2,3-dihydroxy-3-methylpentanoate = (S)-3-methyl-2-oxopentanoate + H2O. Its pathway is amino-acid biosynthesis; L-isoleucine biosynthesis; L-isoleucine from 2-oxobutanoate: step 3/4. The protein operates within amino-acid biosynthesis; L-valine biosynthesis; L-valine from pyruvate: step 3/4. Functions in the biosynthesis of branched-chain amino acids. Catalyzes the dehydration of (2R,3R)-2,3-dihydroxy-3-methylpentanoate (2,3-dihydroxy-3-methylvalerate) into 2-oxo-3-methylpentanoate (2-oxo-3-methylvalerate) and of (2R)-2,3-dihydroxy-3-methylbutanoate (2,3-dihydroxyisovalerate) into 2-oxo-3-methylbutanoate (2-oxoisovalerate), the penultimate precursor to L-isoleucine and L-valine, respectively. This is Dihydroxy-acid dehydratase from Pseudomonas fluorescens (strain SBW25).